The following is a 427-amino-acid chain: Imidazolonepropionase (427 aa).

The Fe(3+) site is built by H81 and H83. Residues H81 and H83 each coordinate Zn(2+). 3 residues coordinate 4-imidazolone-5-propanoate: R90, Y153, and H186. An N-formimidoyl-L-glutamate-binding site is contributed by Y153. H260 lines the Fe(3+) pocket. H260 lines the Zn(2+) pocket. E263 contacts 4-imidazolone-5-propanoate. D335 is a Fe(3+) binding site. A Zn(2+)-binding site is contributed by D335. The N-formimidoyl-L-glutamate site is built by N337 and G339. 4-imidazolone-5-propanoate is bound at residue S340.

It belongs to the metallo-dependent hydrolases superfamily. HutI family. Zn(2+) is required as a cofactor. The cofactor is Fe(3+).

The protein resides in the cytoplasm. It carries out the reaction 4-imidazolone-5-propanoate + H2O = N-formimidoyl-L-glutamate. Its pathway is amino-acid degradation; L-histidine degradation into L-glutamate; N-formimidoyl-L-glutamate from L-histidine: step 3/3. In terms of biological role, catalyzes the hydrolytic cleavage of the carbon-nitrogen bond in imidazolone-5-propanoate to yield N-formimidoyl-L-glutamate. It is the third step in the universal histidine degradation pathway. This chain is Imidazolonepropionase, found in Chloroflexus aggregans (strain MD-66 / DSM 9485).